A 101-amino-acid polypeptide reads, in one-letter code: MEITEVRVFPVNEEKLKAYVTITLDHCFVIRDLKVIHGNTGLFIAMPAKRRKDGTFKDIAHPLNSDTREKMERTILAEYDRELKKGAAAPARATGTDPHED.

The protein belongs to the SpoVG family.

Its function is as follows. Could be involved in septation. The protein is Putative septation protein SpoVG of Anaeromyxobacter dehalogenans (strain 2CP-C).